Reading from the N-terminus, the 309-residue chain is Protein FdhE (309 aa).

It belongs to the FdhE family.

It localises to the cytoplasm. Functionally, necessary for formate dehydrogenase activity. This chain is Protein FdhE, found in Salmonella typhimurium (strain LT2 / SGSC1412 / ATCC 700720).